Consider the following 536-residue polypeptide: Inactive phospholipase D5 (536 aa).

A helical transmembrane segment spans residues 69 to 89 (IVIFALVCCFAILVALIFSAV). An N-linked (GlcNAc...) asparagine glycan is attached at N121. The PLD phosphodiesterase 1 domain maps to 215–242 (NKGRLQSSFWIVDKQHVYIGSAGLDWQS). N-linked (GlcNAc...) asparagine glycosylation occurs at N302. The PLD phosphodiesterase 2 domain occupies 434–460 (FPRLNRNKYMVTDGAAYIGNFDWVGND).

This sequence belongs to the phospholipase D family.

It localises to the membrane. In Homo sapiens (Human), this protein is Inactive phospholipase D5 (PLD5).